Reading from the N-terminus, the 124-residue chain is Small ribosomal subunit protein bS6 (124 aa).

It belongs to the bacterial ribosomal protein bS6 family.

In terms of biological role, binds together with bS18 to 16S ribosomal RNA. This chain is Small ribosomal subunit protein bS6, found in Campylobacter lari (strain RM2100 / D67 / ATCC BAA-1060).